The sequence spans 278 residues: PILR alpha-associated neural protein (278 aa).

The N-terminal stretch at 1 to 27 (MWSAQLLSQLLPLWPLLLLSVLPPAQG) is a signal peptide. A disordered region spans residues 25-93 (AQGSSHRSPP…PSGFEEGPPS (69 aa)). Residues 28–174 (SSHRSPPAPA…FGGRGEGVDP (147 aa)) are Extracellular-facing. Thr-136 carries an O-linked (GalNAc...) threonine glycan. A helical transmembrane segment spans residues 175 to 195 (QLYVTITISIIIVLVATGIIF). At 196–278 (KFCWDRSQKR…QLNRIPLVNL (83 aa)) the chain is on the cytoplasmic side. The tract at residues 206 to 278 (RRPSGQQGAL…QLNRIPLVNL (73 aa)) is disordered. Positions 209–225 (SGQQGALRQEESQQPLT) are enriched in polar residues.

In terms of processing, O-glycosylation at Thr-136 is essential for recognition by PILRA. Mainly expressed in brain and spinal cord. Weak expression also detected in heart, kidney, spleen and lymph node. Virtually no expression detected in liver and embryo relative to brain.

The protein resides in the membrane. Functionally, acts as a ligand for PILRA in neuronal tissues, where it may be involved in immune regulation. In Mus musculus (Mouse), this protein is PILR alpha-associated neural protein (Pianp).